We begin with the raw amino-acid sequence, 349 residues long: Flap endonuclease 1 (349 aa).

An N-domain region spans residues 1 to 98 (MDLADLVKDV…EELERRRKAK (98 aa)). Residues Asp-27, Asp-80, Glu-152, Glu-154, Asp-173, Asp-175, and Asp-236 each coordinate Mg(2+). Positions 116 to 258 (ELRKYSQAIL…RALKIIKKYG (143 aa)) are I-domain. Residues 341–349 (RQTGLDRWF) form an interaction with PCNA region.

It belongs to the XPG/RAD2 endonuclease family. FEN1 subfamily. Interacts with PCNA via subunit PCNA1. Mg(2+) serves as cofactor.

With respect to regulation, heterotrimeric PCNA stimulates the nuclease activity without altering cleavage specificity. Structure-specific nuclease with 5'-flap endonuclease and 5'-3' exonuclease activities involved in DNA replication and repair. During DNA replication, cleaves the 5'-overhanging flap structure that is generated by displacement synthesis when DNA polymerase encounters the 5'-end of a downstream Okazaki fragment. Binds the unpaired 3'-DNA end and kinks the DNA to facilitate 5' cleavage specificity. Cleaves one nucleotide into the double-stranded DNA from the junction in flap DNA, leaving a nick for ligation. Also involved in the base excision repair (BER) pathway. Acts as a genome stabilization factor that prevents flaps from equilibrating into structures that lead to duplications and deletions. Also possesses 5'-3' exonuclease activity on nicked or gapped double-stranded DNA. DNA polymerase I, DNA ligase and the flap endonuclease may be constitutively associated with the PCNA heterotrimer forming a scanning complex able to couple DNA synthesis and Okazaki fragment maturation. The protein is Flap endonuclease 1 of Saccharolobus solfataricus (strain ATCC 35092 / DSM 1617 / JCM 11322 / P2) (Sulfolobus solfataricus).